Here is a 352-residue protein sequence, read N- to C-terminus: Photosystem II D2 protein (352 aa).

The Cytoplasmic portion of the chain corresponds to 1 to 31; that stretch reads MTIAIGRAPAERGWFDILDDWLKRDRFVFVG. The chain crosses the membrane as a helical span at residues 32–53; sequence WSGILLFPCAYLALGGWLTGTT. Over 54–108 the chain is Lumenal; the sequence is FVTSWYTHGLASSYLEGCNFLTVAVSTPANSMGHSLLLLWGPEAQGDFTRWCQLG. Residues 109 to 131 traverse the membrane as a helical segment; sequence GLWTFIALHGAFGLIGFMLRQFE. Residue histidine 117 coordinates chlorophyll a. Residue glutamine 129 coordinates pheophytin a. Residues 132–140 are Cytoplasmic-facing; it reads IARLVGVRP. Residues 141–160 traverse the membrane as a helical segment; sequence YNAIAFSAPIAVFVSVFLIY. Asparagine 142 contacts pheophytin a. Residues 161-193 are Lumenal-facing; the sequence is PLGQSSWFFAPSFGVAAIFRFLLFFQGFHNWTL. A helical transmembrane segment spans residues 194-217; the sequence is NPFHMMGVAGVLGGALLCAIHGAT. Histidine 197 contacts chlorophyll a. Residues histidine 214 and phenylalanine 261 each coordinate a plastoquinone. A Fe cation-binding site is contributed by histidine 214. Over 218-265 the chain is Cytoplasmic; sequence VENTLFQDGEGASTFRAFNPTQAEETYSMVTANRFWSQIFGIAFSNKR. A helical transmembrane segment spans residues 266–288; it reads WLHFFMLFVPVTGLWMSAIGVVG. Histidine 268 is a Fe cation binding site. At 289–352 the chain is on the lumenal side; that stretch reads LALNLRSYDF…EEVLPRGNAL (64 aa).

This sequence belongs to the reaction center PufL/M/PsbA/D family. In terms of assembly, PSII is composed of 1 copy each of membrane proteins PsbA, PsbB, PsbC, PsbD, PsbE, PsbF, PsbH, PsbI, PsbJ, PsbK, PsbL, PsbM, PsbT, PsbX, PsbY, PsbZ, Psb30/Ycf12, peripheral proteins PsbO, CyanoQ (PsbQ), PsbU, PsbV and a large number of cofactors. It forms dimeric complexes. Part of a photosystem II (PSII) assembly intermediate complex PSII-I; crystallized from a strain deleted of psbJ, it forms monomeric PSII before addition of the oxygen evolving complex. PSII-I includes 3 assembly factors not found in mature PSII (Psb27, Psb28 and Psb34). It depends on The D1/D2 heterodimer binds P680, chlorophylls that are the primary electron donor of PSII, and subsequent electron acceptors. It shares a non-heme iron and each subunit binds pheophytin, quinone, additional chlorophylls, carotenoids and lipids. There is also a Cl(-1) ion associated with D1 and D2, which is required for oxygen evolution. PSII binds additional chlorophylls, carotenoids and specific lipids. as a cofactor.

The protein resides in the cellular thylakoid membrane. It catalyses the reaction 2 a plastoquinone + 4 hnu + 2 H2O = 2 a plastoquinol + O2. Its function is as follows. Photosystem II (PSII) is a light-driven water:plastoquinone oxidoreductase that uses light energy to abstract electrons from H(2)O, generating O(2) and a proton gradient subsequently used for ATP formation. It consists of a core antenna complex that captures photons, and an electron transfer chain that converts photonic excitation into a charge separation. The D1/D2 (PsbA/PsbD) reaction center heterodimer binds P680, the primary electron donor of PSII as well as several subsequent electron acceptors. D2 is needed for assembly of a stable PSII complex. This Thermosynechococcus vestitus (strain NIES-2133 / IAM M-273 / BP-1) protein is Photosystem II D2 protein.